A 332-amino-acid polypeptide reads, in one-letter code: MAKEPVRVLVTGAAGQIGYALVPMIARGIMLGADQPVILHMLDIPPAAEALNGVKMELIDAAFPLLKGVVATTDAVEGCTGVNVAVMVGGFPRKEGMERKDVMSKNVSIYKSQAAALEKHAAPNCKVLVVANPANTNALILKEFAPSIPEKNISCLTRLDHNRALGQISERLSVPVSDVKNVIIWGNHSSSQYPDVNHAKVQTSSGEKPVRELVKDDAWLDGEFISTVQQRGAAIIKARKLSSALSAASSACDHIRDWVLGTPEGTFVSMGVYSDGSYSVPSGLIYSFPVTCRNGDWSIVQGLPIDEVSRKKMDLTAEELKEEKDLAYSCLS.

NAD(+)-binding positions include 16–17 (QI) and Asp43. Met56 is subject to Methionine sulfoxide. Residue Gly90 participates in NAD(+) binding. Met97 is subject to Methionine sulfoxide. Arg99 lines the oxaloacetate pocket. Gln113 is an NAD(+) binding site. Lys119 participates in a covalent cross-link: Glycyl lysine isopeptide (Lys-Gly) (interchain with G-Cter in ubiquitin). Asn132 contacts NAD(+). Oxaloacetate-binding residues include Asn132, Arg163, His188, and Ser243. Catalysis depends on His188, which acts as the Proton acceptor.

This sequence belongs to the LDH/MDH superfamily. MDH type 2 family. In terms of assembly, forms a homodimer. Forms a disulfide-linked homodimer upon oxidation. Interacts with 14-3-3-like proteins GRF1 GRF3 and GRF8. Interacts with TRX1, TRX2, TRX3, TRX4 and TRX5. As to expression, expressed in rosette leaves.

The protein resides in the cytoplasm. It carries out the reaction (S)-malate + NAD(+) = oxaloacetate + NADH + H(+). With respect to regulation, decreased activity upon treatment with hydrogen peroxide. Functionally, catalyzes a reversible NAD-dependent dehydrogenase reaction involved in central metabolism and redox homeostasis between organellar compartments. The protein is Malate dehydrogenase 1, cytoplasmic (MDH1) of Arabidopsis thaliana (Mouse-ear cress).